The primary structure comprises 111 residues: UPF0145 protein BMA10229_A0446 (111 aa).

The protein belongs to the UPF0145 family.

The chain is UPF0145 protein BMA10229_A0446 from Burkholderia mallei (strain NCTC 10229).